The following is a 151-amino-acid chain: Caveolin-3 (151 aa).

The Cytoplasmic portion of the chain corresponds to 1-83 (MMAEERTDLE…RLLSTLLGVP (83 aa)). A Glycyl lysine isopeptide (Lys-Gly) (interchain with G-Cter in SUMO3) cross-link involves residue K38. The segment at 64–114 (TFTVSKYWCYRLLSTLLGVPLALLWGFLFACISFCHIWAVVPCIKSYLIEI) is required for interaction with DAG1. Positions 84–104 (LALLWGFLFACISFCHIWAVV) form an intramembrane region, helical. At 105 to 151 (PCIKSYLIEIQCISHIYSLCIRTFCNPVFAALGQVCSNIKVMLRKEV) the chain is on the cytoplasmic side.

The protein belongs to the caveolin family. Homooligomer. Interacts with DYSF. Interacts with DLG1 and KCNA5; forms a ternary complex. Interacts with DAG1 (via its C-terminal); the interaction prevents binding of DAG1 with DMD. Interacts with TRIM72. Interacts with MUSK; may regulate MUSK signaling. Interacts with POPDC1. Interacts with CAVIN1, CAVIN2 and CAVIN4. In terms of processing, sumoylation with SUMO3 by PIAS4 may reduce agonist-induced internalization and desensitization of adrenergic receptor ABRD2. In terms of tissue distribution, expressed specifically in skeletal muscle and heart.

The protein resides in the golgi apparatus membrane. The protein localises to the cell membrane. It is found in the membrane. Its subcellular location is the caveola. It localises to the sarcolemma. May act as a scaffolding protein within caveolar membranes. Interacts directly with G-protein alpha subunits and can functionally regulate their activity. May also regulate voltage-gated potassium channels. Plays a role in the sarcolemma repair mechanism of both skeletal muscle and cardiomyocytes that permits rapid resealing of membranes disrupted by mechanical stress. Mediates the recruitment of CAVIN2 and CAVIN3 proteins to the caveolae. This chain is Caveolin-3 (CAV3), found in Sus scrofa (Pig).